A 274-amino-acid polypeptide reads, in one-letter code: Urease accessory protein UreD (274 aa).

This sequence belongs to the UreD family. As to quaternary structure, ureD, UreF and UreG form a complex that acts as a GTP-hydrolysis-dependent molecular chaperone, activating the urease apoprotein by helping to assemble the nickel containing metallocenter of UreC. The UreE protein probably delivers the nickel.

Its subcellular location is the cytoplasm. Required for maturation of urease via the functional incorporation of the urease nickel metallocenter. The polypeptide is Urease accessory protein UreD (Thermosynechococcus vestitus (strain NIES-2133 / IAM M-273 / BP-1)).